Consider the following 474-residue polypeptide: Alpha-galactosidase (474 aa).

Residues Met-1–Pro-22 form the signal peptide. 2 cysteine pairs are disulfide-bonded: Cys-43-Cys-75 and Cys-122-Cys-152. Asn-44 is a glycosylation site (N-linked (GlcNAc...) asparagine). Substrate contacts are provided by Asp-73, Asp-74, and Lys-148. Asp-150 serves as the catalytic Nucleophile. N-linked (GlcNAc...) asparagine glycosylation is present at Asn-176. A substrate-binding site is contributed by Arg-206. The active-site Proton donor is Asp-210. 2 disulfides stabilise this stretch: Cys-222–Cys-238 and Cys-224–Cys-231. Residue Gln-252 coordinates substrate. 5 N-linked (GlcNAc...) asparagine glycosylation sites follow: Asn-271, Asn-414, Asn-423, Asn-436, and Asn-455.

The protein belongs to the glycosyl hydrolase 27 family. As to quaternary structure, homotetramer.

The protein localises to the secreted. It carries out the reaction Hydrolysis of terminal, non-reducing alpha-D-galactose residues in alpha-D-galactosides, including galactose oligosaccharides, galactomannans and galactolipids.. The polypeptide is Alpha-galactosidase (MEL) (Torulaspora delbrueckii (Yeast)).